A 311-amino-acid polypeptide reads, in one-letter code: MTDSESPIPKKSIPARFPKWLRQKLPLGRVFAQTDNTIKNKGLPTVCEEASCPNRTHCWSRHTATYLALGDACTRRCGFCDIDFTRNPLPPDPEEGAKIAESAKALGLKHIVITMVSRDDLEDGGASALVHIIETLHTELPTATIEVLASDFEGNIAALHHLLDAHIAIYNHNVETVERLTPFVRHKATYRRSLMMLENAAKYLPNLMTKSGIMVGLGEQESEVKQTLKDLADHGVKIVTIGQYLRPSRRHIPVKSYVSPETFDYYRSVGESLGLFIYAGPFVRSSFNADSVFEAMRQRETSTSALLPNKD.

7 residues coordinate [4Fe-4S] cluster: Cys47, Cys52, Cys58, Cys73, Cys77, Cys80, and Ser286. The Radical SAM core domain maps to 59-276 (WSRHTATYLA…RSVGESLGLF (218 aa)).

Belongs to the radical SAM superfamily. Lipoyl synthase family. [4Fe-4S] cluster is required as a cofactor.

It is found in the cytoplasm. The catalysed reaction is [[Fe-S] cluster scaffold protein carrying a second [4Fe-4S](2+) cluster] + N(6)-octanoyl-L-lysyl-[protein] + 2 oxidized [2Fe-2S]-[ferredoxin] + 2 S-adenosyl-L-methionine + 4 H(+) = [[Fe-S] cluster scaffold protein] + N(6)-[(R)-dihydrolipoyl]-L-lysyl-[protein] + 4 Fe(3+) + 2 hydrogen sulfide + 2 5'-deoxyadenosine + 2 L-methionine + 2 reduced [2Fe-2S]-[ferredoxin]. The protein operates within protein modification; protein lipoylation via endogenous pathway; protein N(6)-(lipoyl)lysine from octanoyl-[acyl-carrier-protein]: step 2/2. Its function is as follows. Catalyzes the radical-mediated insertion of two sulfur atoms into the C-6 and C-8 positions of the octanoyl moiety bound to the lipoyl domains of lipoate-dependent enzymes, thereby converting the octanoylated domains into lipoylated derivatives. In Chlamydia trachomatis serovar D (strain ATCC VR-885 / DSM 19411 / UW-3/Cx), this protein is Lipoyl synthase.